The chain runs to 186 residues: Small ribosomal subunit protein uS5 (186 aa).

The 64-residue stretch at 18 to 81 (FVDKLVHINR…EAAKRAMIRV (64 aa)) folds into the S5 DRBM domain.

It belongs to the universal ribosomal protein uS5 family. As to quaternary structure, part of the 30S ribosomal subunit. Contacts proteins S4 and S8.

With S4 and S12 plays an important role in translational accuracy. In terms of biological role, located at the back of the 30S subunit body where it stabilizes the conformation of the head with respect to the body. This Parvibaculum lavamentivorans (strain DS-1 / DSM 13023 / NCIMB 13966) protein is Small ribosomal subunit protein uS5.